The following is a 294-amino-acid chain: Glyceraldehyde-3-phosphate dehydrogenase (294 aa).

Residues Asp19, Lys63, and Thr105 each contribute to the NAD(+) site. Residues 134-136 (SCT), Thr165, 194-195 (TG), and Arg217 contribute to the D-glyceraldehyde 3-phosphate site. Cys135 acts as the Nucleophile in catalysis.

This sequence belongs to the glyceraldehyde-3-phosphate dehydrogenase family. As to quaternary structure, homotetramer.

The protein resides in the cytoplasm. It catalyses the reaction D-glyceraldehyde 3-phosphate + phosphate + NAD(+) = (2R)-3-phospho-glyceroyl phosphate + NADH + H(+). Its pathway is carbohydrate degradation; glycolysis; pyruvate from D-glyceraldehyde 3-phosphate: step 1/5. Catalyzes the oxidative phosphorylation of glyceraldehyde 3-phosphate (G3P) to 1,3-bisphosphoglycerate (BPG) using the cofactor NAD. The first reaction step involves the formation of a hemiacetal intermediate between G3P and a cysteine residue, and this hemiacetal intermediate is then oxidized to a thioester, with concomitant reduction of NAD to NADH. The reduced NADH is then exchanged with the second NAD, and the thioester is attacked by a nucleophilic inorganic phosphate to produce BPG. This chain is Glyceraldehyde-3-phosphate dehydrogenase (gap), found in Klebsiella aerogenes (Enterobacter aerogenes).